Here is an 877-residue protein sequence, read N- to C-terminus: Protein P (877 aa).

The terminal protein domain (TP) stretch occupies residues 1-183 (MHPFSQLFRN…GKPYSWGHRQ (183 aa)). Positions 184-382 (LEQHNGQQHE…YCLHHIVSSL (199 aa)) are spacer. A compositionally biased stretch (basic and acidic residues) spans 185 to 198 (EQHNGQQHESHLQS). Residues 185–347 (EQHNGQQHES…PSSSGLCGGT (163 aa)) are disordered. Positions 233–242 (FGESQKSART) are enriched in polar residues. A compositionally biased stretch (low complexity) spans 267–281 (QQGSSQVSSPRSKSS). 2 stretches are compositionally biased toward polar residues: residues 282–302 (NFRNQTQANHSSWNQRHPTWY) and 338–347 (PSSSGLCGGT). The tract at residues 383–723 (EDWGPCTISG…YAELWPVARQ (341 aa)) is polymerase/reverse transcriptase domain (RT). One can recognise a Reverse transcriptase domain in the interval 393-634 (DVTIRSPRTP…HHLHFMGYVI (242 aa)). Residues D465, D585, and D586 each coordinate Mg(2+).

Belongs to the hepadnaviridae P protein family.

It carries out the reaction DNA(n) + a 2'-deoxyribonucleoside 5'-triphosphate = DNA(n+1) + diphosphate. It catalyses the reaction Endonucleolytic cleavage to 5'-phosphomonoester.. With respect to regulation, activated by host HSP70 and HSP40 in vitro to be able to bind the epsilon loop of the pgRNA. Because deletion of the RNase H region renders the protein partly chaperone-independent, the chaperones may be needed indirectly to relieve occlusion of the RNA-binding site by this domain. Inhibited by several reverse-transcriptase inhibitors: Lamivudine, Adefovir and Entecavir. In terms of biological role, multifunctional enzyme that converts the viral RNA genome into dsDNA in viral cytoplasmic capsids. This enzyme displays a DNA polymerase activity that can copy either DNA or RNA templates, and a ribonuclease H (RNase H) activity that cleaves the RNA strand of RNA-DNA heteroduplexes in a partially processive 3'- to 5'-endonucleasic mode. Neo-synthesized pregenomic RNA (pgRNA) are encapsidated together with the P protein, and reverse-transcribed inside the nucleocapsid. Initiation of reverse-transcription occurs first by binding the epsilon loop on the pgRNA genome, and is initiated by protein priming, thereby the 5'-end of (-)DNA is covalently linked to P protein. Partial (+)DNA is synthesized from the (-)DNA template and generates the relaxed circular DNA (RC-DNA) genome. After budding and infection, the RC-DNA migrates in the nucleus, and is converted into a plasmid-like covalently closed circular DNA (cccDNA). The activity of P protein does not seem to be necessary for cccDNA generation, and is presumably released from (+)DNA by host nuclear DNA repair machinery. The sequence is that of Protein P from Arctic squirrel hepatitis virus (ASHV).